A 902-amino-acid polypeptide reads, in one-letter code: Cytosolic carboxypeptidase 2 (902 aa).

In terms of domain architecture, Peptidase M14 spans 396–666 (YPYTYTDLQC…HVCDTLLDFC (271 aa)). The Zn(2+) site is built by His-462, Glu-465, and His-558. Glu-630 functions as the Proton donor/acceptor in the catalytic mechanism. Positions 746-758 (FKKKKKKSLQTRK) are enriched in basic residues. Disordered stretches follow at residues 746 to 770 (FKKK…KNLM) and 796 to 879 (FKNS…PRSR). A compositionally biased stretch (polar residues) spans 853-866 (VSCSPKRTINSSQE).

This sequence belongs to the peptidase M14 family. As to quaternary structure, interacts with RARRES1, KIF11 AND MAPRE1. Requires Zn(2+) as cofactor.

The protein resides in the cytoplasm. It localises to the cytosol. It is found in the cytoskeleton. Its subcellular location is the microtubule organizing center. The protein localises to the centrosome. The protein resides in the centriole. It localises to the cilium basal body. The catalysed reaction is (L-glutamyl)(n+1)-gamma-L-glutamyl-L-glutamyl-[protein] + H2O = (L-glutamyl)(n)-gamma-L-glutamyl-L-glutamyl-[protein] + L-glutamate. Its activity is regulated as follows. Inhibited by RARRES1. In terms of biological role, metallocarboxypeptidase that mediates deglutamylation of tubulin and non-tubulin target proteins. Catalyzes the removal of polyglutamate side chains present on the gamma-carboxyl group of glutamate residues within the C-terminal tail of tubulin protein. Specifically cleaves tubulin long-side-chains, while it is not able to remove the branching point glutamate. Also catalyzes the removal of polyglutamate residues from the carboxy-terminus of non-tubulin proteins such as MYLK. This Homo sapiens (Human) protein is Cytosolic carboxypeptidase 2.